A 172-amino-acid polypeptide reads, in one-letter code: ATP synthase subunit b (172 aa).

Residues 13–33 traverse the membrane as a helical segment; that stretch reads GINGGDILFQLVMFLILLALL.

This sequence belongs to the ATPase B chain family. In terms of assembly, F-type ATPases have 2 components, F(1) - the catalytic core - and F(0) - the membrane proton channel. F(1) has five subunits: alpha(3), beta(3), gamma(1), delta(1), epsilon(1). F(0) has three main subunits: a(1), b(2) and c(10-14). The alpha and beta chains form an alternating ring which encloses part of the gamma chain. F(1) is attached to F(0) by a central stalk formed by the gamma and epsilon chains, while a peripheral stalk is formed by the delta and b chains.

It is found in the cell membrane. Its function is as follows. F(1)F(0) ATP synthase produces ATP from ADP in the presence of a proton or sodium gradient. F-type ATPases consist of two structural domains, F(1) containing the extramembraneous catalytic core and F(0) containing the membrane proton channel, linked together by a central stalk and a peripheral stalk. During catalysis, ATP synthesis in the catalytic domain of F(1) is coupled via a rotary mechanism of the central stalk subunits to proton translocation. In terms of biological role, component of the F(0) channel, it forms part of the peripheral stalk, linking F(1) to F(0). In Priestia megaterium (strain ATCC 12872 / QMB1551) (Bacillus megaterium), this protein is ATP synthase subunit b.